The chain runs to 274 residues: 2,3,4,5-tetrahydropyridine-2,6-dicarboxylate N-succinyltransferase (274 aa).

2 residues coordinate substrate: arginine 104 and aspartate 141.

Belongs to the transferase hexapeptide repeat family. As to quaternary structure, homotrimer.

The protein resides in the cytoplasm. It catalyses the reaction (S)-2,3,4,5-tetrahydrodipicolinate + succinyl-CoA + H2O = (S)-2-succinylamino-6-oxoheptanedioate + CoA. The protein operates within amino-acid biosynthesis; L-lysine biosynthesis via DAP pathway; LL-2,6-diaminopimelate from (S)-tetrahydrodipicolinate (succinylase route): step 1/3. The polypeptide is 2,3,4,5-tetrahydropyridine-2,6-dicarboxylate N-succinyltransferase (Salmonella typhi).